Here is an 88-residue protein sequence, read N- to C-terminus: Small ribosomal subunit protein bS16 (88 aa).

It belongs to the bacterial ribosomal protein bS16 family.

This Desulfitobacterium hafniense (strain DSM 10664 / DCB-2) protein is Small ribosomal subunit protein bS16.